A 200-amino-acid chain; its full sequence is Pyridoxal 5'-phosphate synthase subunit PdxT (200 aa).

Residue 52 to 54 (GES) participates in L-glutamine binding. C84 functions as the Nucleophile in the catalytic mechanism. Residues R116 and 145-146 (IR) each bind L-glutamine. Catalysis depends on charge relay system residues H181 and E183.

The protein belongs to the glutaminase PdxT/SNO family. In the presence of PdxS, forms a dodecamer of heterodimers. Only shows activity in the heterodimer.

It carries out the reaction aldehydo-D-ribose 5-phosphate + D-glyceraldehyde 3-phosphate + L-glutamine = pyridoxal 5'-phosphate + L-glutamate + phosphate + 3 H2O + H(+). The enzyme catalyses L-glutamine + H2O = L-glutamate + NH4(+). The protein operates within cofactor biosynthesis; pyridoxal 5'-phosphate biosynthesis. Functionally, catalyzes the hydrolysis of glutamine to glutamate and ammonia as part of the biosynthesis of pyridoxal 5'-phosphate. The resulting ammonia molecule is channeled to the active site of PdxS. The chain is Pyridoxal 5'-phosphate synthase subunit PdxT from Saccharolobus islandicus (strain Y.N.15.51 / Yellowstone #2) (Sulfolobus islandicus).